A 502-amino-acid polypeptide reads, in one-letter code: 2,3-bisphosphoglycerate-independent phosphoglycerate mutase (502 aa).

The Mn(2+) site is built by Asp12 and Ser62. The Phosphoserine intermediate role is filled by Ser62. Substrate-binding positions include His123, 152 to 153, Arg183, Arg189, 255 to 258, and Lys329; these read RD and RPDR. Positions 394, 398, 435, 436, and 453 each coordinate Mn(2+).

It belongs to the BPG-independent phosphoglycerate mutase family. As to quaternary structure, monomer. Requires Mn(2+) as cofactor.

It carries out the reaction (2R)-2-phosphoglycerate = (2R)-3-phosphoglycerate. It functions in the pathway carbohydrate degradation; glycolysis; pyruvate from D-glyceraldehyde 3-phosphate: step 3/5. Its function is as follows. Catalyzes the interconversion of 2-phosphoglycerate and 3-phosphoglycerate. This chain is 2,3-bisphosphoglycerate-independent phosphoglycerate mutase, found in Malacoplasma penetrans (strain HF-2) (Mycoplasma penetrans).